The sequence spans 317 residues: Methionyl-tRNA formyltransferase (317 aa).

109–112 (SLLP) serves as a coordination point for (6S)-5,6,7,8-tetrahydrofolate.

The protein belongs to the Fmt family.

It carries out the reaction L-methionyl-tRNA(fMet) + (6R)-10-formyltetrahydrofolate = N-formyl-L-methionyl-tRNA(fMet) + (6S)-5,6,7,8-tetrahydrofolate + H(+). Its function is as follows. Attaches a formyl group to the free amino group of methionyl-tRNA(fMet). The formyl group appears to play a dual role in the initiator identity of N-formylmethionyl-tRNA by promoting its recognition by IF2 and preventing the misappropriation of this tRNA by the elongation apparatus. This Halalkalibacterium halodurans (strain ATCC BAA-125 / DSM 18197 / FERM 7344 / JCM 9153 / C-125) (Bacillus halodurans) protein is Methionyl-tRNA formyltransferase.